A 389-amino-acid polypeptide reads, in one-letter code: MGQNLSTSNPLGFFPDHQLDPAFRANTANPDWDFNPNKDSWPDANKVGAGAFGLGFTPPHGGLLGWSPQAQGILQTLPANPPPASTNRQSGRQPTPLSPPLRNTHPQAMQWNSTTFHQTLQDPRVRGLYLPAGGSSSGTVNPVPTTVSPISSIFSRIGDPALNMENITSGFLGPLLVLQAGFFLLTKILTIPKSLDSWWTSLNFLGGTTVCLGQNSQSPTSNHSPTSCPPTCPGYRWMCLRRFIIFLFILLLCLIFLLVLLDYQGMLPVCPLIPGSSTTSTGPCRTCTTPAQGTSMYPSCCCTKPSDGNCTCIPIPSSWAFGKFLWEWASARFSWLSLLVPFVQWFVGLSPTVWLLVIWMMWYWGPKLFTILSPFLPLLPIFFCLWVYI.

At M1 the chain carries N-acetylmethionine. G2 carries N-myristoyl glycine; by host lipidation. Residues G2–A108 are pre-S1. The segment at G2–N163 is pre-S. The Virion surface; in external conformation segment spans residues G2–G170. The Intravirion; in internal conformation segment spans residues G2–R242. Positions T76–N103 are disordered. A compositionally biased stretch (polar residues) spans S85 to T95. The tract at residues M109–N163 is pre-S2. Residues F171 to I191 form a helical membrane-spanning segment. Over P192–R242 the chain is Intravirion; in external conformation. The chain crosses the membrane as a helical span at residues F243–Y263. At Q264–S337 the chain is on the virion surface side. N309 carries N-linked (GlcNAc...) asparagine; by host glycosylation. Residues L338–I358 traverse the membrane as a helical segment. Residues W359–W364 are Intravirion-facing. A helical transmembrane segment spans residues G365–V387. At Y388–I389 the chain is on the virion surface side.

The protein belongs to the orthohepadnavirus major surface antigen family. In its internal form (Li-HBsAg), interacts with the capsid protein and with the isoform S. Interacts with host chaperone CANX. As to quaternary structure, associates with host chaperone CANX through its pre-S2 N glycan; this association may be essential for isoform M proper secretion. In terms of assembly, interacts with isoform L. Interacts with the antigens of satellite virus HDV (HDVAgs); this interaction is required for encapsidation of HDV genomic RNA. Isoform M is N-terminally acetylated by host at a ratio of 90%, and N-glycosylated by host at the pre-S2 region. Post-translationally, myristoylated.

Its subcellular location is the virion membrane. Its function is as follows. The large envelope protein exists in two topological conformations, one which is termed 'external' or Le-HBsAg and the other 'internal' or Li-HBsAg. In its external conformation the protein attaches the virus to cell receptors and thereby initiating infection. This interaction determines the species specificity and liver tropism. This attachment induces virion internalization predominantly through caveolin-mediated endocytosis. The large envelope protein also assures fusion between virion membrane and endosomal membrane. In its internal conformation the protein plays a role in virion morphogenesis and mediates the contact with the nucleocapsid like a matrix protein. In terms of biological role, the middle envelope protein plays an important role in the budding of the virion. It is involved in the induction of budding in a nucleocapsid independent way. In this process the majority of envelope proteins bud to form subviral lipoprotein particles of 22 nm of diameter that do not contain a nucleocapsid. The polypeptide is Large envelope protein (Homo sapiens (Human)).